A 438-amino-acid polypeptide reads, in one-letter code: Glutamate-1-semialdehyde 2,1-aminomutase (438 aa).

N6-(pyridoxal phosphate)lysine is present on Lys-277.

This sequence belongs to the class-III pyridoxal-phosphate-dependent aminotransferase family. HemL subfamily. In terms of assembly, homodimer. Pyridoxal 5'-phosphate is required as a cofactor.

It localises to the cytoplasm. It catalyses the reaction (S)-4-amino-5-oxopentanoate = 5-aminolevulinate. It participates in porphyrin-containing compound metabolism; protoporphyrin-IX biosynthesis; 5-aminolevulinate from L-glutamyl-tRNA(Glu): step 2/2. The protein operates within porphyrin-containing compound metabolism; chlorophyll biosynthesis. The chain is Glutamate-1-semialdehyde 2,1-aminomutase from Synechococcus sp. (strain CC9311).